The chain runs to 292 residues: NIF3-like protein 1 (292 aa).

It belongs to the GTP cyclohydrolase I type 2/NIF3 family.

The sequence is that of NIF3-like protein 1 (anon-35F/36A) from Drosophila melanogaster (Fruit fly).